The primary structure comprises 542 residues: Propane 2-monooxygenase, hydroxylase component large subunit (542 aa).

6 residues coordinate Fe cation: glutamate 97, glutamate 127, histidine 130, glutamate 192, glutamate 226, and histidine 229.

The protein belongs to the TmoA/XamoA family. The propane 2-monooxygenase multicomponent enzyme system is composed of an electron transfer component and a monooxygenase component interacting with the effector protein MimD. The electron transfer component is composed of a reductase (MimB), and the monooxygenase component is formed by a large subunit (MimA) and a small subunit (MimC). Requires the presence of the chaperonin-like protein MimG to ensure a productive folding, resulting of a soluble MimA, which leads to the active form of MimABCD. The cofactor is Fe(2+).

The enzyme catalyses propane + NADH + O2 + H(+) = propan-2-ol + NAD(+) + H2O. It catalyses the reaction acetone + NADH + O2 + H(+) = hydroxyacetone + NAD(+) + H2O. It carries out the reaction butan-2-one + NADH + O2 + H(+) = 1-hydroxy-2-butanone + NAD(+) + H2O. The catalysed reaction is phenol + NADH + O2 + H(+) = hydroquinone + NAD(+) + H2O. Functionally, component of the propane 2-monooxygenase multicomponent enzyme system which is involved in the degradation of propane via the O2-dependent hydroxylation of propane. Also involved in the degradation of acetone via the O2-dependent hydroxylation of acetone. Also able to catalyze the oxidation of phenol, methylethylketone (2-butanone), 1-propanol and 2-propanol. The protein is Propane 2-monooxygenase, hydroxylase component large subunit of Mycolicibacterium smegmatis (strain ATCC 700084 / mc(2)155) (Mycobacterium smegmatis).